The sequence spans 245 residues: Lactate utilization protein A (245 aa).

Belongs to the LutA/YkgE family.

Its function is as follows. Is involved in L-lactate degradation and allows cells to grow with lactate as the sole carbon source. The protein is Lactate utilization protein A of Exiguobacterium sp. (strain ATCC BAA-1283 / AT1b).